A 155-amino-acid chain; its full sequence is MMSTEQMQPLELSEDRLDKLDPRCSHLDDLSDQFIKDCDLKKKPRKGKNVQATLNVESDQKKPRRKDTPALHIPPFIPGVFSEHLIKRYDVQERHPKGKMIPVLHNTDLEQKKPRRKDTPALHMSPFAAGVTLLRDERPKAIVEDDEKDGDKIAI.

Residues 41 to 73 form a disordered region; the sequence is KKKPRKGKNVQATLNVESDQKKPRRKDTPALHI. The span at 58–69 shows a compositional bias: basic and acidic residues; sequence SDQKKPRRKDTP. Phosphothreonine; by PKG/PRKG1 is present on residues threonine 68 and threonine 119.

In terms of processing, substrate for cGMP-dependent protein kinase. Phosphorylated by PRKG1 isoform alpha. Phosphorylation of Thr-68 and Thr-119 is required for its phosphatase activity. Post-translationally, substrate for cGMP-dependent protein kinase. Highly expressed in cerebellum.

Its function is as follows. Inhibits phosphatase activities of protein phosphatase 1 (PP1) and protein phosphatase 2A (PP2A) complexes. In Homo sapiens (Human), this protein is Protein phosphatase 1 regulatory subunit 17 (PPP1R17).